Consider the following 595-residue polypeptide: FERM domain-containing protein 3 (595 aa).

Positions 32-312 (MKCTIRLLDD…ENQAFYKYAK (281 aa)) constitute an FERM domain. Residues 529 to 549 (LLVVGLGLLLFVFPLLLLLLE) form a helical membrane-spanning segment.

Its subcellular location is the membrane. Putative tumor suppressor gene that may be implicated in the origin and progression of lung cancer. The protein is FERM domain-containing protein 3 (Frmd3) of Mus musculus (Mouse).